Here is a 3660-residue protein sequence, read N- to C-terminus: Dystrophin (3660 aa).

An actin-binding region spans residues 1–244 (MSAHVLWYEE…YVTSLFQVLP (244 aa)). 2 Calponin-homology (CH) domains span residues 19–123 (DVQK…LHWQ) and 138–244 (TNSE…QVLP). Spectrin repeat units follow at residues 341 to 449 (MDLD…NLHK), 450 to 558 (ILMD…LLQD), 561 to 669 (RKWQ…QVSQ), 721 to 830 (EIRK…WLEY), 832 to 936 (NSII…QLQT), 945 to 1047 (RYKD…KLED), 1050 to 1156 (TKLQ…ALKG), 1159 to 1265 (DKTV…TLEE), 1268 to 1369 (ACWH…SLEQ), 1470 to 1570 (EQRL…ELEK), 1573 to 1678 (KLSR…LLME), 1681 to 1782 (KHME…FIPL), 1879 to 1981 (HQWY…TVLE), 2013 to 2103 (LSEV…RFDK), 2106 to 2211 (EKWR…RIEE), 2214 to 2321 (NILS…EIEI), 2472 to 2574 (FNKA…QLHE), 2577 to 2683 (KDST…ALES), 2686 to 2799 (LMLQ…HLEA), 2802 to 2904 (DQWK…LRRQ), 2906 to 2928 (DDVR…KIDD), and 2931 to 3037 (ERLQ…QLHE). The WW domain maps to 3052 to 3085 (TSVQGPWERAISPNKVPYYINHETQTTCWDHPKM). A ZZ-type; degenerate zinc finger spans residues 3305–3361 (KHQAKCNICKECPIIGFRYRSLKHFNYDICQSCFFSGRVAKGHKMHYPMVEYCTPTT). Residues Cys3310, Cys3313, Cys3334, and Cys3337 each contribute to the Zn(2+) site. Disordered stretches follow at residues 3503–3526 (KQQH…VSPQ) and 3575–3660 (PQAD…EATM). Composition is skewed to polar residues over residues 3582 to 3601 (NGTT…SSQP) and 3637 to 3647 (QLNNSFPSSRG).

Its subcellular location is the cell membrane. The protein localises to the sarcolemma. It localises to the cytoplasm. It is found in the cytoskeleton. The protein resides in the postsynaptic cell membrane. In terms of biological role, may play a role in anchoring the cytoskeleton to the plasma membrane. This is Dystrophin (DMD) from Gallus gallus (Chicken).